The following is a 160-amino-acid chain: Ribonuclease H (160 aa).

Residues 5–146 form the RNase H type-1 domain; the sequence is PGGLVEIWTD…VDQLATAARE (142 aa). 4 residues coordinate Mg(2+): D14, E52, D74, and D138.

The protein belongs to the RNase H family. Monomer. Mg(2+) serves as cofactor.

The protein resides in the cytoplasm. It carries out the reaction Endonucleolytic cleavage to 5'-phosphomonoester.. Functionally, endonuclease that specifically degrades the RNA of RNA-DNA hybrids. The protein is Ribonuclease H of Acidiphilium cryptum (strain JF-5).